Reading from the N-terminus, the 297-residue chain is 4-diphosphocytidyl-2-C-methyl-D-erythritol kinase (297 aa).

The active site involves K10. Position 95–105 (95–105) interacts with ATP; sequence PVAGGMAGGSA. D137 is an active-site residue.

This sequence belongs to the GHMP kinase family. IspE subfamily.

It carries out the reaction 4-CDP-2-C-methyl-D-erythritol + ATP = 4-CDP-2-C-methyl-D-erythritol 2-phosphate + ADP + H(+). It participates in isoprenoid biosynthesis; isopentenyl diphosphate biosynthesis via DXP pathway; isopentenyl diphosphate from 1-deoxy-D-xylulose 5-phosphate: step 3/6. In terms of biological role, catalyzes the phosphorylation of the position 2 hydroxy group of 4-diphosphocytidyl-2C-methyl-D-erythritol. The polypeptide is 4-diphosphocytidyl-2-C-methyl-D-erythritol kinase (Streptomyces avermitilis (strain ATCC 31267 / DSM 46492 / JCM 5070 / NBRC 14893 / NCIMB 12804 / NRRL 8165 / MA-4680)).